Here is a 274-residue protein sequence, read N- to C-terminus: Hydroxyacylglutathione hydrolase, cytoplasmic isozyme (274 aa).

Zn(2+)-binding residues include His59, His61, Asp63, His64, His121, and Asp144. Residues Arg153 and 188–190 contribute to the substrate site; that span reads HEY. His188 contacts Zn(2+). Position 257 is a phosphoserine (Ser257). 268–271 provides a ligand contact to substrate; sequence RAMK.

The protein belongs to the metallo-beta-lactamase superfamily. Glyoxalase II family. Zn(2+) serves as cofactor.

The protein localises to the cytoplasm. The enzyme catalyses an S-(2-hydroxyacyl)glutathione + H2O = a 2-hydroxy carboxylate + glutathione + H(+). It carries out the reaction (R)-S-lactoylglutathione + H2O = (R)-lactate + glutathione + H(+). Its pathway is secondary metabolite metabolism; methylglyoxal degradation; (R)-lactate from methylglyoxal: step 2/2. Inhibited by various thiol compounds such as glutathione and coenzyme A. In terms of biological role, thiolesterase that catalyzes the hydrolysis of S-D-lactoylglutathione to form glutathione and D-lactic acid. Involved in the metabolism of methylglyoxal, a toxic compound for yeast proliferation, by converting methylglyoxal to lactate via S-D-lactoylglutathione by sequential enzyme reactions catalyzed by glyoxalase I and glyoxalase II. This Saccharomyces cerevisiae (strain ATCC 204508 / S288c) (Baker's yeast) protein is Hydroxyacylglutathione hydrolase, cytoplasmic isozyme.